Here is a 240-residue protein sequence, read N- to C-terminus: Orotidine 5'-phosphate decarboxylase (240 aa).

Substrate contacts are provided by residues Asp15, Lys37, 64–73, Thr127, Arg188, Gln197, Gly217, and Arg218; that span reads DLKYHDIPNT. Lys66 acts as the Proton donor in catalysis.

The protein belongs to the OMP decarboxylase family. Type 1 subfamily. As to quaternary structure, homodimer.

It carries out the reaction orotidine 5'-phosphate + H(+) = UMP + CO2. It participates in pyrimidine metabolism; UMP biosynthesis via de novo pathway; UMP from orotate: step 2/2. Catalyzes the decarboxylation of orotidine 5'-monophosphate (OMP) to uridine 5'-monophosphate (UMP). This chain is Orotidine 5'-phosphate decarboxylase, found in Geobacter sp. (strain M21).